We begin with the raw amino-acid sequence, 128 residues long: Large ribosomal subunit protein bL19 (128 aa).

The protein belongs to the bacterial ribosomal protein bL19 family.

Functionally, this protein is located at the 30S-50S ribosomal subunit interface and may play a role in the structure and function of the aminoacyl-tRNA binding site. The sequence is that of Large ribosomal subunit protein bL19 from Aromatoleum aromaticum (strain DSM 19018 / LMG 30748 / EbN1) (Azoarcus sp. (strain EbN1)).